The chain runs to 217 residues: Thiamine-phosphate synthase (217 aa).

Residues 39–43 (QYRDK) and N71 contribute to the 4-amino-2-methyl-5-(diphosphooxymethyl)pyrimidine site. D72 and D91 together coordinate Mg(2+). T110 is a binding site for 4-amino-2-methyl-5-(diphosphooxymethyl)pyrimidine. 2-[(2R,5Z)-2-carboxy-4-methylthiazol-5(2H)-ylidene]ethyl phosphate is bound at residue 137–139 (SHT). A 4-amino-2-methyl-5-(diphosphooxymethyl)pyrimidine-binding site is contributed by K140. Residue G167 coordinates 2-[(2R,5Z)-2-carboxy-4-methylthiazol-5(2H)-ylidene]ethyl phosphate.

This sequence belongs to the thiamine-phosphate synthase family. Requires Mg(2+) as cofactor.

It carries out the reaction 2-[(2R,5Z)-2-carboxy-4-methylthiazol-5(2H)-ylidene]ethyl phosphate + 4-amino-2-methyl-5-(diphosphooxymethyl)pyrimidine + 2 H(+) = thiamine phosphate + CO2 + diphosphate. It catalyses the reaction 2-(2-carboxy-4-methylthiazol-5-yl)ethyl phosphate + 4-amino-2-methyl-5-(diphosphooxymethyl)pyrimidine + 2 H(+) = thiamine phosphate + CO2 + diphosphate. The enzyme catalyses 4-methyl-5-(2-phosphooxyethyl)-thiazole + 4-amino-2-methyl-5-(diphosphooxymethyl)pyrimidine + H(+) = thiamine phosphate + diphosphate. It participates in cofactor biosynthesis; thiamine diphosphate biosynthesis; thiamine phosphate from 4-amino-2-methyl-5-diphosphomethylpyrimidine and 4-methyl-5-(2-phosphoethyl)-thiazole: step 1/1. In terms of biological role, condenses 4-methyl-5-(beta-hydroxyethyl)thiazole monophosphate (THZ-P) and 2-methyl-4-amino-5-hydroxymethyl pyrimidine pyrophosphate (HMP-PP) to form thiamine monophosphate (TMP). In Alcanivorax borkumensis (strain ATCC 700651 / DSM 11573 / NCIMB 13689 / SK2), this protein is Thiamine-phosphate synthase.